Reading from the N-terminus, the 65-residue chain is Large ribosomal subunit protein bL35 (65 aa).

This sequence belongs to the bacterial ribosomal protein bL35 family.

The chain is Large ribosomal subunit protein bL35 from Synechococcus sp. (strain WH7803).